The primary structure comprises 256 residues: MSDTESLNDALGLFDEPEDFRPEKPKEHYANYERIDVPDISKSKITNLKLQLVGSSPLWGHLLWNAGIYTARHLDKYPELVSNKNVLELGAASALPSLVAGLIGAKRAVVTDYPDADLMANIQYNVNTIIPDELKENVRVEGYIWGNEYDPLTIHLDGDKKFDLIILSDLVFNHNQHDKLLQTTKDLLATNGKALVVFSPHRPHLLEADLQFFETCKEYGLTPEKIEMVNWKPMFEEDEETAEVRSRVYAYYMTHA.

The disordered stretch occupies residues 1-26 (MSDTESLNDALGLFDEPEDFRPEKPK). Residues Trp-64, 90-92 (GAA), Asp-112, Trp-145, and Ser-168 contribute to the S-adenosyl-L-methionine site.

The protein belongs to the class I-like SAM-binding methyltransferase superfamily. EFM7 family.

It is found in the cytoplasm. Its function is as follows. S-adenosyl-L-methionine-dependent protein methyltransferase that trimethylates the N-terminal glycine 'Gly-2' of elongation factor 1-alpha, before also catalyzing the mono- and dimethylation of 'Lys-3'. In Candida glabrata (strain ATCC 2001 / BCRC 20586 / JCM 3761 / NBRC 0622 / NRRL Y-65 / CBS 138) (Yeast), this protein is Protein N-terminal and lysine N-methyltransferase EFM7.